The primary structure comprises 451 residues: UDP-N-acetylmuramoylalanine--D-glutamate ligase (451 aa).

119–125 (GSNGKTT) serves as a coordination point for ATP.

The protein belongs to the MurCDEF family.

Its subcellular location is the cytoplasm. The catalysed reaction is UDP-N-acetyl-alpha-D-muramoyl-L-alanine + D-glutamate + ATP = UDP-N-acetyl-alpha-D-muramoyl-L-alanyl-D-glutamate + ADP + phosphate + H(+). It participates in cell wall biogenesis; peptidoglycan biosynthesis. Cell wall formation. Catalyzes the addition of glutamate to the nucleotide precursor UDP-N-acetylmuramoyl-L-alanine (UMA). This chain is UDP-N-acetylmuramoylalanine--D-glutamate ligase, found in Streptococcus mutans serotype c (strain ATCC 700610 / UA159).